We begin with the raw amino-acid sequence, 65 residues long: UPF0434 protein HS_0657 (65 aa).

Belongs to the UPF0434 family.

In Histophilus somni (strain 129Pt) (Haemophilus somnus), this protein is UPF0434 protein HS_0657.